The chain runs to 407 residues: Multifunctional CCA protein (407 aa).

ATP is bound by residues glycine 8 and arginine 11. Residues glycine 8 and arginine 11 each coordinate CTP. The Mg(2+) site is built by aspartate 21 and aspartate 23. ATP-binding residues include arginine 91, arginine 137, and arginine 140. Residues arginine 91, arginine 137, and arginine 140 each contribute to the CTP site. Residues 228-329 (TGIHTLLVAE…VKIFNKLDVW (102 aa)) form the HD domain.

It belongs to the tRNA nucleotidyltransferase/poly(A) polymerase family. Bacterial CCA-adding enzyme type 1 subfamily. Monomer. Can also form homodimers and oligomers. It depends on Mg(2+) as a cofactor. Requires Ni(2+) as cofactor.

The catalysed reaction is a tRNA precursor + 2 CTP + ATP = a tRNA with a 3' CCA end + 3 diphosphate. It catalyses the reaction a tRNA with a 3' CCA end + 2 CTP + ATP = a tRNA with a 3' CCACCA end + 3 diphosphate. Its function is as follows. Catalyzes the addition and repair of the essential 3'-terminal CCA sequence in tRNAs without using a nucleic acid template. Adds these three nucleotides in the order of C, C, and A to the tRNA nucleotide-73, using CTP and ATP as substrates and producing inorganic pyrophosphate. tRNA 3'-terminal CCA addition is required both for tRNA processing and repair. Also involved in tRNA surveillance by mediating tandem CCA addition to generate a CCACCA at the 3' terminus of unstable tRNAs. While stable tRNAs receive only 3'-terminal CCA, unstable tRNAs are marked with CCACCA and rapidly degraded. In Vibrio vulnificus (strain CMCP6), this protein is Multifunctional CCA protein.